Reading from the N-terminus, the 278-residue chain is Probable ribosomal RNA small subunit methyltransferase A (278 aa).

Positions 25, 27, 52, 73, 98, and 114 each coordinate S-adenosyl-L-methionine.

It belongs to the class I-like SAM-binding methyltransferase superfamily. rRNA adenine N(6)-methyltransferase family. RsmA subfamily.

Its subcellular location is the cytoplasm. Functionally, specifically dimethylates two adjacent adenosines in the loop of a conserved hairpin near the 3'-end of 16S rRNA in the 30S particle. May play a critical role in biogenesis of 30S subunits. The chain is Probable ribosomal RNA small subunit methyltransferase A from Methanopyrus kandleri (strain AV19 / DSM 6324 / JCM 9639 / NBRC 100938).